A 558-amino-acid chain; its full sequence is Nucleoprotein (558 aa).

Residues 54 to 237 (MRKEKRDDKD…ITEQQSSINI (184 aa)) form a binding site for the cap structure m7GTP region. Mg(2+) contacts are provided by aspartate 382 and glutamate 384. Mn(2+) contacts are provided by aspartate 382 and glutamate 384. Glutamate 392, cysteine 499, histidine 502, and cysteine 518 together coordinate Zn(2+). Aspartate 522 provides a ligand contact to Mg(2+). Aspartate 522 is a binding site for Mn(2+).

This sequence belongs to the arenaviridae nucleocapsid protein family. Homomultimerizes to form the nucleocapsid. Binds to viral genomic RNA. Interacts with glycoprotein G2. Interacts with protein Z; this interaction probably directs the encapsidated genome to budding sites. Interacts with protein L; this interaction does not interfere with Z-L interaction. Interacts with host IKBKE (via Protein kinase domain); the interaction inhibits IKBKE kinase activity.

The protein localises to the virion. It is found in the host cytoplasm. Functionally, encapsidates the genome, protecting it from nucleases. The encapsidated genomic RNA is termed the nucleocapsid (NC). Serves as template for viral transcription and replication. The increased presence of protein N in host cell does not seem to trigger the switch from transcription to replication as observed in other negative strain RNA viruses. Through the interaction with host IKBKE, strongly inhibits the phosphorylation and nuclear translocation of host IRF3, a protein involved in interferon activation pathway, leading to the inhibition of interferon-beta and IRF3-dependent promoters activation. Also encodes a functional 3'-5' exoribonuclease that degrades preferentially dsRNA substrates and thereby participates in the suppression of interferon induction. This chain is Nucleoprotein, found in Lymphocytic choriomeningitis virus (strain Armstrong) (LCMV).